Reading from the N-terminus, the 55-residue chain is Large ribosomal subunit protein bL33A (55 aa).

It belongs to the bacterial ribosomal protein bL33 family.

The protein is Large ribosomal subunit protein bL33A of Mycobacterium sp. (strain KMS).